The sequence spans 336 residues: MAAWAGFSEEELRKLQHNGEVANQAVSVTLGRGRKPAQTNRSRQQLQRERALQLAAKQKEISQSLLPDQQLTRPPEPPASSHPAPPAETPDEQSVPVKHEAEPVKPDPASPVQSIPPADFKELDKQEVELREKNRLQQLQWEQRIMEEKNKKRKALLTKTIAEKSKQTQAEAIKLKKIQRELQVLDDSVSSDIGVLRKLIEQSSMDYSLAWKRFEKAEAEYVAAKMDLHRKTEVKEQLTEHLCAIIQQNELRKARKLEELMLQLELNAEEVPSPDQTQLQDKQKEPVTENGPAAELERCTEANGSSMSKDSSITETKISQDNQESEAADVSADGLR.

Disordered regions lie at residues 26 to 118 (VSVT…IPPA) and 268 to 336 (AEEV…DGLR). Polar residues predominate over residues 61–72 (ISQSLLPDQQLT). Residues 74 to 88 (PPEPPASSHPAPPAE) show a composition bias toward pro residues. A coiled-coil region spans residues 213–271 (RFEKAEAEYVAAKMDLHRKTEVKEQLTEHLCAIIQQNELRKARKLEELMLQLELNAEEV). Over residues 302 to 322 (ANGSSMSKDSSITETKISQDN) the composition is skewed to polar residues.

This sequence belongs to the GORAB family.

The protein resides in the cytoplasm. It is found in the golgi apparatus. This Danio rerio (Zebrafish) protein is RAB6-interacting golgin (gorab).